Here is a 380-residue protein sequence, read N- to C-terminus: Sialidase-2 (380 aa).

Positions 20–23 (YRIP) match the FRIP motif motif. The substrate site is built by arginine 21 and arginine 41. The active-site Proton acceptor is aspartate 46. A BNR 1 repeat occupies 127-138 (VTSTDHGRTWSS). Substrate is bound by residues tyrosine 179 and tyrosine 181. One copy of the BNR 2 repeat lies at 197-208 (FLSHDHGRTWAR). 3 residues coordinate substrate: glutamate 218, arginine 237, and arginine 304. Tyrosine 334 serves as the catalytic Nucleophile. The active site involves glutamate 355.

This sequence belongs to the glycosyl hydrolase 33 family. In terms of tissue distribution, expressed in skeletal muscle, fetal liver and embryonic carcinoma cell line NT2-D1.

It is found in the cytoplasm. Its subcellular location is the cytosol. The catalysed reaction is Hydrolysis of alpha-(2-&gt;3)-, alpha-(2-&gt;6)-, alpha-(2-&gt;8)- glycosidic linkages of terminal sialic acid residues in oligosaccharides, glycoproteins, glycolipids, colominic acid and synthetic substrates.. It catalyses the reaction a ganglioside GD1a + H2O = a ganglioside GM1 + N-acetylneuraminate. The enzyme catalyses a ganglioside GM1 + H2O = a ganglioside GA1 + N-acetylneuraminate. It carries out the reaction a ganglioside GT1b + H2O = a ganglioside GD1b + N-acetylneuraminate. The catalysed reaction is a ganglioside GD1b + H2O = a ganglioside GM1 + N-acetylneuraminate. It catalyses the reaction a ganglioside GD3 + H2O = a ganglioside GM3 + N-acetylneuraminate. The enzyme catalyses a ganglioside GM3 + H2O = a beta-D-galactosyl-(1-&gt;4)-beta-D-glucosyl-(1&lt;-&gt;1)-ceramide + N-acetylneuraminate. It carries out the reaction a ganglioside GM2 + H2O = a ganglioside GA2 + N-acetylneuraminate. The catalysed reaction is a neolactoside IV(3)-alpha-NeuAc-nLc4Cer(d18:1(4E)) + H2O = a neolactoside nLc4Cer(d18:1(4E)) + N-acetylneuraminate. It catalyses the reaction N-acetyl-alpha-neuraminosyl-(2-&gt;3)-beta-D-galactosyl-(1-&gt;4)-D-glucose + H2O = lactose + N-acetylneuraminate. In terms of biological role, exo-alpha-sialidase that catalyzes the hydrolytic cleavage of the terminal sialic acid (N-acetylneuraminic acid, Neu5Ac) of a glycan moiety in the catabolism of glycolipids, glycoproteins and oligosacharides. Recognizes sialyl linkage positions of the glycan moiety as well as the supramolecular organization of the sialoglycoconjugate. Displays preference for alpha-(2-&gt;3)-sialylated GD1a and GT1B gangliosides over alpha-(2-&gt;8)-sialylated GD1b, in both monomeric forms and micelles. Hydrolyzes monomeric GM1 ganglioside, but has no activity toward the miscellar form. Has lower sialidase activity for glycoproteins such as fetuin and TF/transferrin that carry a mixture of alpha-(2-&gt;3) and alpha-(2-&gt;6)-sialyl linkages. Cleaves milk oligosaccharide alpha-(2-&gt;3)-sialyllactose, but is inactive toward alpha-(2-&gt;6)-sialyllactose isomer. Has no activity toward colominic acid, a homomer of alpha-(2-&gt;8)-linked Neu5Ac residues. This is Sialidase-2 (NEU2) from Homo sapiens (Human).